The chain runs to 694 residues: Katanin p80 WD40 repeat-containing subunit B1 (694 aa).

WD repeat units lie at residues 18–58, 61–100, 103–142, 145–186, 188–226, and 229–269; these read AHSS…CIMS, GHTS…ILRT, GHKA…CVFR, GHTQ…TEFT, HTSA…MIGS, and GETG…DVVH. Disordered stretches follow at residues 319–410 and 470–492; these read KPIP…PFPA and TTSA…STGI. A compositionally biased stretch (polar residues) spans 327-349; it reads ALGTTLRRNYERPTTSCTGQEMK. Basic and acidic residues predominate over residues 350–378; it reads QSSEADRRSPEGERRSPSSEDEKEDKESS. A compositionally biased stretch (low complexity) spans 470 to 481; that stretch reads TTSASSPSRPVV. Residues 482-492 are compositionally biased toward polar residues; the sequence is NTTKPKPSTGI.

It belongs to the WD repeat KATNB1 family. Interacts with katna1. This interaction enhances the microtubule binding and severing activity of katna1 and also targets this activity to the centrosome.

It localises to the cytoplasm. Its subcellular location is the cytoskeleton. It is found in the microtubule organizing center. The protein resides in the centrosome. The protein localises to the spindle pole. It localises to the spindle. Its function is as follows. Participates in a complex which severs microtubules in an ATP-dependent manner. May act to target the enzymatic subunit of this complex to sites of action such as the centrosome. Microtubule severing may promote rapid reorganization of cellular microtubule arrays and the release of microtubules from the centrosome following nucleation. The polypeptide is Katanin p80 WD40 repeat-containing subunit B1 (katnb1) (Danio rerio (Zebrafish)).